We begin with the raw amino-acid sequence, 890 residues long: Leucine--tRNA ligase (890 aa).

A 'HIGH' region motif is present at residues 48-58 (PYPSGKLHMGH). The short motif at 645–649 (KMSKS) is the 'KMSKS' region element. Residue lysine 648 coordinates ATP.

This sequence belongs to the class-I aminoacyl-tRNA synthetase family.

The protein localises to the cytoplasm. It catalyses the reaction tRNA(Leu) + L-leucine + ATP = L-leucyl-tRNA(Leu) + AMP + diphosphate. The protein is Leucine--tRNA ligase of Polynucleobacter necessarius subsp. necessarius (strain STIR1).